A 553-amino-acid chain; its full sequence is Zinc finger protein with KRAB and SCAN domains 3 (553 aa).

Residues E28–R49 form a disordered region. Phosphoserine occurs at positions 33 and 44. Residues R51–L133 enclose the SCAN box domain. The residue at position 136 (T136) is a Phosphothreonine. K176 is covalently cross-linked (Glycyl lysine isopeptide (Lys-Gly) (interchain with G-Cter in SUMO2)). T206 bears the Phosphothreonine mark. The 61-residue stretch at L213–P273 folds into the KRAB domain. S223 carries the phosphoserine modification. 5 C2H2-type zinc fingers span residues F313 to H335, Y341 to H363, Y369 to H391, Y397 to H419, and Y425 to H447. Phosphothreonine is present on T448. C2H2-type zinc fingers lie at residues Y479–H501 and F507–H529.

The protein belongs to the krueppel C2H2-type zinc-finger protein family. As to expression, expressed in heart, brain, spleen, lung, liver, skeletal muscle, kidney and testis.

The protein localises to the nucleus. The protein resides in the cytoplasm. Its function is as follows. Transcriptional factor that binds to the consensus sequence 5'-[GT][AG][AGT]GGGG-3' and acts as a repressor of autophagy. Specifically represses expression of genes involved in autophagy and lysosome biogenesis/function such as MAP1LC3B, ULK1 or WIPI2. Associates with chromatin at the ITGB4 and VEGF promoters. The polypeptide is Zinc finger protein with KRAB and SCAN domains 3 (Zkscan3) (Mus musculus (Mouse)).